The following is a 103-amino-acid chain: Large ribosomal subunit protein uL24 (103 aa).

Belongs to the universal ribosomal protein uL24 family. Part of the 50S ribosomal subunit.

One of two assembly initiator proteins, it binds directly to the 5'-end of the 23S rRNA, where it nucleates assembly of the 50S subunit. In terms of biological role, one of the proteins that surrounds the polypeptide exit tunnel on the outside of the subunit. This chain is Large ribosomal subunit protein uL24, found in Agathobacter rectalis (strain ATCC 33656 / DSM 3377 / JCM 17463 / KCTC 5835 / VPI 0990) (Eubacterium rectale).